A 164-amino-acid chain; its full sequence is Ribosome maturation factor RimP (164 aa).

This sequence belongs to the RimP family.

The protein resides in the cytoplasm. Required for maturation of 30S ribosomal subunits. This chain is Ribosome maturation factor RimP, found in Thermodesulfovibrio yellowstonii (strain ATCC 51303 / DSM 11347 / YP87).